Here is a 461-residue protein sequence, read N- to C-terminus: MYDIKWIRDNPEVFDQGRKRRGLEPLAARLLELDDARRGAIAKLQVAQERRNAASKEIGQAMAAKDQAKADALMAEVSALKRDLPELEAAERAAAALLDKALSEIPNLPLEEVPFGRDENDNREHHTFGEKPRFSFDPAEHYELGETLGLMDFETAAKLSGARFVVNKGPLARLERALGAFMLDLHTGEHGYTEVNPPILVRDDAMFGTAQLPKFENDQFWARPGAHPLLIDMFGREEAEEMKKNRLWLIPTAEVPLTNLVRESILDEKQLPLRFTASTPCFRAEAGSAGRDTRGMIRQHQFTKVELVSITTPEQALAEHERMLSCAEEVLKRLKLPYRVVTLCTGDMGFASQKTYDIEVWLPGQDRYREISSVSVCGDFQARRMNARYRPEGAKNTRFVHTLNGSGVAVGRALVAVLENYQTEDGSIIVPDALAPYMGGITRIEKPALERPNSEKPVSRA.

Residues 112-134 (EVPFGRDENDNREHHTFGEKPRF) are disordered. Residues 114 to 134 (PFGRDENDNREHHTFGEKPRF) show a composition bias toward basic and acidic residues. 252-254 (TAE) lines the L-serine pocket. 283–285 (RAE) is an ATP binding site. E306 provides a ligand contact to L-serine. 370–373 (EISS) provides a ligand contact to ATP. S406 is a binding site for L-serine.

Belongs to the class-II aminoacyl-tRNA synthetase family. Type-1 seryl-tRNA synthetase subfamily. Homodimer. The tRNA molecule binds across the dimer.

Its subcellular location is the cytoplasm. The catalysed reaction is tRNA(Ser) + L-serine + ATP = L-seryl-tRNA(Ser) + AMP + diphosphate + H(+). It carries out the reaction tRNA(Sec) + L-serine + ATP = L-seryl-tRNA(Sec) + AMP + diphosphate + H(+). It functions in the pathway aminoacyl-tRNA biosynthesis; selenocysteinyl-tRNA(Sec) biosynthesis; L-seryl-tRNA(Sec) from L-serine and tRNA(Sec): step 1/1. Functionally, catalyzes the attachment of serine to tRNA(Ser). Is also able to aminoacylate tRNA(Sec) with serine, to form the misacylated tRNA L-seryl-tRNA(Sec), which will be further converted into selenocysteinyl-tRNA(Sec). This chain is Serine--tRNA ligase, found in Methylocella silvestris (strain DSM 15510 / CIP 108128 / LMG 27833 / NCIMB 13906 / BL2).